We begin with the raw amino-acid sequence, 780 residues long: Cullin-5 (780 aa).

Serine 34 is subject to Phosphoserine. Threonine 210 is modified (phosphothreonine). In terms of domain architecture, Cullin neddylation spans 711–772; it reads RILRTQEAII…HKYIRRDESD (62 aa). Residue lysine 724 forms a Glycyl lysine isopeptide (Lys-Gly) (interchain with G-Cter in NEDD8) linkage.

The protein belongs to the cullin family. As to quaternary structure, component of multiple cullin-5-RING E3 ubiquitin-protein ligase complexes (ECS complexes, also named CRL5 complexes) formed of CUL5, Elongin BC (ELOB and ELOC), RNF7/RBX2 and a variable SOCS box domain-containing protein as substrate-specific recognition component. CUL5-containing ECS complexes specifically contain RNF7/RBX2, and not RBX1, as catalytic subunit. Component of the ECS(ASB2) complex with the substrate recognition component ASB2. Component of the ECS(ASB6) complex with the substrate recognition component ASB6. Component of the ECS(ASB7) complex with the substrate recognition component ASB7. Component of the ECS(ASB9) complex with the substrate recognition component ASB9. Component of the ECS(ASB11) complex with the substrate recognition component ASB11. Component of the ECS(ASB12) complex with the substrate recognition component ASB12. Component of the ECS(LRRC41) complex with the substrate recognition component LRRC41. Component of the ECS(SOCS1) complex with the substrate recognition component SOCS1. Component of the ECS(SOCS2) complex with the substrate recognition component SOCS2. Component of the ECS(WSB1) complex with the substrate recognition subunit WSB1. Component of the ECS(SOCS3) complex with the substrate recognition component SOCS3. Component of the ECS(SOCS7) complex with the substrate recognition component SOCS7. Component of the ECS(SPSB1) complex with the substrate recognition component SPSB1. Component of the ECS(SPSB3) complex with the substrate recognition component SPSB3. Component of the ECS(SPSB2) complex with the substrate recognition component SPSB2. Component of the ECS(SPSB4) complex with the substrate recognition component SPSB4. Component of the ECS(RAB40) complex with the substrate recognition subunit RAB40A, RAB40B or RAB40C. Component of the ECS(KLHDC1) complex with the substrate recognition component KLHDC1. Component of the ECS(PCMTD1) complex with the substrate recognition subunit PCMTD1. May also form complexes containing RBX1 and ELOA or VHL; additional evidence is however required to confirm this result in vivo. Interacts (when neddylated) with ARIH2; leading to activate the E3 ligase activity of ARIH2. Interacts with ERCC6; the interaction is induced by DNA damaging agents or inhibitors of RNA polymerase II elongation. Interacts with ELOA (via the BC-box). Interacts (unneddylated form) with DCUN1D1, DCUN1D2, DCUN1D3, DCUN1D4 and DCUN1D5; these interactions promote the cullin neddylation. (Microbial infection) Interacts (via the substrate recognition component) with HIV-1 Vif; forming an active cullin-5-RING E3 ubiquitin-protein ligase complex (ECS complex). In terms of assembly, (Microbial infection) Interacts (via the substrate recognition component) with human adenovirus 5 proteins E1B-55K and E4-orf6. As to quaternary structure, (Microbial infection) Interacts with herpes virus 8 protein LANA1; this interaction promotes the degradation of NF-kappa-B component RELA. (Microbial infection) Interacts with molluscum contagiosum virus protein MC132; this interaction promotes the degradation of NF-kappa-B component RELA. Post-translationally, neddylated; which enhances the ubiquitination activity of ECS complexes and prevents binding of the inhibitor CAND1. Deneddylated via its interaction with the COP9 signalosome (CSN).

It is found in the nucleus. It participates in protein modification; protein ubiquitination. Core component of multiple cullin-5-RING E3 ubiquitin-protein ligase complexes (ECS complexes, also named CRL5 complexes), which mediate the ubiquitination and subsequent proteasomal degradation of target proteins. Acts a scaffold protein that contributes to catalysis through positioning of the substrate and the ubiquitin-conjugating enzyme. The functional specificity of the E3 ubiquitin-protein ligase complex depends on the variable SOCS box-containing substrate recognition component. Acts as a key regulator of neuron positioning during cortex development: component of various SOCS-containing ECS complexes, such as the ECS(SOCS7) complex, that regulate reelin signaling by mediating ubiquitination and degradation of DAB1. ECS(SOCS1) seems to direct ubiquitination of JAK2. The ECS(SOCS2) complex mediates the ubiquitination and subsequent proteasomal degradation of phosphorylated EPOR and GHR. The ECS(SPSB3) complex catalyzes ubiquitination of nuclear CGAS. ECS(KLHDC1) complex is part of the DesCEND (destruction via C-end degrons) pathway and mediates ubiquitination and degradation of truncated SELENOS selenoprotein produced by failed UGA/Sec decoding, which ends with a glycine. The ECS(ASB9) complex mediates ubiquitination and degradation of CKB. As part of some ECS complex, promotes 'Lys-11'-linked ubiquitination and degradation of BTRC. As part of a multisubunit ECS complex, polyubiquitinates monoubiquitinated POLR2A. As part of the ECS(RAB40C) complex, mediates ANKRD28 ubiquitination and degradation, thereby inhibiting protein phosphatase 6 (PP6) complex activity and focal adhesion assembly during cell migration. As part of the ECS(RAB40A) complex, mediates RHOU 'Lys-48'-linked ubiquitination and degradation, thus inhibiting focal adhesion disassembly during cell migration. As part of the ECS(RAB40B) complex, mediates LIMA1/EPLIN and RAP2 ubiquitination, thereby regulating actin cytoskeleton dynamics and stress fiber formation during cell migration. May form a cell surface vasopressin receptor. Its function is as follows. (Microbial infection) Following infection by HIV-1 virus, CUL5 associates with HIV-1 Vif proteins and forms a cullin-5-RING E3 ubiquitin-protein ligase complex (ECS complex) that catalyzes ubiquitination and degradation of APOBEC3F and APOBEC3G. The complex can also ubiquitinate APOBEC3H to some extent. Functionally, (Microbial infection) Seems to be involved in proteasomal degradation of p53/TP53 stimulated by adenovirus E1B-55 kDa protein. The sequence is that of Cullin-5 from Homo sapiens (Human).